The primary structure comprises 370 residues: MMMSSSQTPVRIAFVFLVILAATDAHSDHRTPPPACGGAAVGGECHSVARALRLKLIAIPAILAASVAGVCLPLFARSVPALRPDGGLFAVVKAFASGVILGTGYMHVLPDSFNDLTSPCLPRKPWSEFPFAAFVAMLAAVFTLMVDSLMLTFHTRGSKGRASSAVAHHGDHGHCHAHALGQADVAALSTTEAADQGSGDVEAGNTTKAQLLRNRVIVQVLEMGIVVHSVVIGLGMGASQNVCTIRPLVAALCFHQMFEGMGLGGCILQAGYGGRTRSALVFFFSTTTPFGIALGLALTRVYSDSSPTALVVVGLLNAASAGLLHYMALVELLAADFMGPKLQGNVRLQLAASLAILLGAGGMSVMAKWA.

The signal sequence occupies residues 1–25; sequence MMMSSSQTPVRIAFVFLVILAATDA. Residues 26–55 are Extracellular-facing; the sequence is HSDHRTPPPACGGAAVGGECHSVARALRLK. The chain crosses the membrane as a helical span at residues 56-76; the sequence is LIAIPAILAASVAGVCLPLFA. Over 77 to 85 the chain is Cytoplasmic; it reads RSVPALRPD. A helical membrane pass occupies residues 86–106; sequence GGLFAVVKAFASGVILGTGYM. At 107–130 the chain is on the extracellular side; that stretch reads HVLPDSFNDLTSPCLPRKPWSEFP. Residues 131–151 traverse the membrane as a helical segment; the sequence is FAAFVAMLAAVFTLMVDSLML. The Cytoplasmic segment spans residues 152–215; the sequence is TFHTRGSKGR…TTKAQLLRNR (64 aa). Residues 216–236 form a helical membrane-spanning segment; sequence VIVQVLEMGIVVHSVVIGLGM. The Extracellular segment spans residues 237–247; the sequence is GASQNVCTIRP. A helical membrane pass occupies residues 248–268; the sequence is LVAALCFHQMFEGMGLGGCIL. Topologically, residues 269 to 278 are cytoplasmic; that stretch reads QAGYGGRTRS. The helical transmembrane segment at 279–299 threads the bilayer; it reads ALVFFFSTTTPFGIALGLALT. Residues 300–309 are Extracellular-facing; it reads RVYSDSSPTA. A helical membrane pass occupies residues 310–330; the sequence is LVVVGLLNAASAGLLHYMALV. Topologically, residues 331 to 349 are cytoplasmic; that stretch reads ELLAADFMGPKLQGNVRLQ. A helical membrane pass occupies residues 350–370; that stretch reads LAASLAILLGAGGMSVMAKWA.

The protein belongs to the ZIP transporter (TC 2.A.5) family.

The protein resides in the cell membrane. Its function is as follows. Iron transporter that may play a role in the uptake of iron from the rhizosphere across the plasma membrane in the root epidermal layer. The polypeptide is Fe(2+) transport protein 2 (IRT2) (Oryza sativa subsp. japonica (Rice)).